The chain runs to 397 residues: Serpin B10 (397 aa).

Positions 74-77 match the Nuclear localization signal motif; that stretch reads KKRK.

Belongs to the serpin family. Ov-serpin subfamily.

Its subcellular location is the nucleus. It localises to the cytoplasm. Functionally, protease inhibitor that may play a role in the regulation of protease activities during hematopoiesis and apoptosis induced by TNF. May regulate protease activities in the cytoplasm and in the nucleus. The chain is Serpin B10 (SERPINB10) from Otolemur garnettii (Small-eared galago).